The sequence spans 725 residues: Putative coiled-coil domain-containing protein 144B (725 aa).

A compositionally biased stretch (basic and acidic residues) spans 1–11 (MASWGGEKRGG). Disordered regions lie at residues 1-25 (MASWGGEKRGGAEGSPKLAVYATRK), 87-188 (AARS…NLTE), 213-260 (LPEN…DCDR), 453-485 (NMNQNSDSGSTNNYKSLKPKLENLSSLPPDSDR), and 528-586 (EEEM…KVKN). 2 stretches are compositionally biased toward polar residues: residues 129-150 (PESLPQNNNPDWHPTNLTLSDE) and 165-178 (PSVSPSMPENQSAT). A coiled-coil region spans residues 215–244 (ENKESKEAEQDLELTSEEEQERLKGCENKQ). Acidic residues predominate over residues 224–234 (QDLELTSEEEQ). Over residues 453–467 (NMNQNSDSGSTNNYK) the composition is skewed to polar residues. Residues 490 to 546 (YLHEELQQDMQKFKNEVNTLEEEFLALKKENVQLHKEVEEEMEKHRSNSTELSGTLT) adopt a coiled-coil conformation. Over residues 528 to 537 (EEEMEKHRSN) the composition is skewed to basic and acidic residues. Low complexity predominate over residues 543-552 (GTLTDGTTVG). Positions 563-583 (PRKENEEHDRPADKTANEKNK) are enriched in basic and acidic residues. The stretch at 648 to 713 (LLKLKNNHCD…ALKQENGRKE (66 aa)) forms a coiled coil.

The protein belongs to the CCDC144 family.

In Homo sapiens (Human), this protein is Putative coiled-coil domain-containing protein 144B.